Consider the following 219-residue polypeptide: Elongation factor Ts, chloroplastic (219 aa).

Belongs to the EF-Ts family.

The protein resides in the plastid. It localises to the chloroplast. Functionally, associates with the EF-Tu.GDP complex and induces the exchange of GDP to GTP. It remains bound to the aminoacyl-tRNA.EF-Tu.GTP complex up to the GTP hydrolysis stage on the ribosome. This Guillardia theta (Cryptophyte) protein is Elongation factor Ts, chloroplastic (tsf).